Consider the following 390-residue polypeptide: Dual-specificity RNA methyltransferase RlmN (390 aa).

Glu-110 (proton acceptor) is an active-site residue. The Radical SAM core domain maps to 116–355 (EADRATLCVS…VIIRKTRGDD (240 aa)). The cysteines at positions 123 and 360 are disulfide-linked. Residues Cys-130, Cys-134, and Cys-137 each contribute to the [4Fe-4S] cluster site. Residues 184–185 (GE), Ser-216, 238–240 (SLH), and Asn-317 contribute to the S-adenosyl-L-methionine site. Cys-360 serves as the catalytic S-methylcysteine intermediate.

Belongs to the radical SAM superfamily. RlmN family. It depends on [4Fe-4S] cluster as a cofactor.

The protein resides in the cytoplasm. The catalysed reaction is adenosine(2503) in 23S rRNA + 2 reduced [2Fe-2S]-[ferredoxin] + 2 S-adenosyl-L-methionine = 2-methyladenosine(2503) in 23S rRNA + 5'-deoxyadenosine + L-methionine + 2 oxidized [2Fe-2S]-[ferredoxin] + S-adenosyl-L-homocysteine. It carries out the reaction adenosine(37) in tRNA + 2 reduced [2Fe-2S]-[ferredoxin] + 2 S-adenosyl-L-methionine = 2-methyladenosine(37) in tRNA + 5'-deoxyadenosine + L-methionine + 2 oxidized [2Fe-2S]-[ferredoxin] + S-adenosyl-L-homocysteine. Specifically methylates position 2 of adenine 2503 in 23S rRNA and position 2 of adenine 37 in tRNAs. m2A2503 modification seems to play a crucial role in the proofreading step occurring at the peptidyl transferase center and thus would serve to optimize ribosomal fidelity. This is Dual-specificity RNA methyltransferase RlmN from Haemophilus influenzae (strain 86-028NP).